Here is a 176-residue protein sequence, read N- to C-terminus: Tubulin polymerization-promoting protein family member 3 (176 aa).

Residues 132–151 are disordered; sequence TGSHKERFDQTGKGKGKSGR. The segment covering 134–151 has biased composition (basic and acidic residues); it reads SHKERFDQTGKGKGKSGR.

The protein belongs to the TPPP family.

The protein resides in the cytoplasm. Its subcellular location is the cytoskeleton. Regulator of microtubule dynamic that has microtubule bundling activity. The sequence is that of Tubulin polymerization-promoting protein family member 3 (tppp3) from Xenopus laevis (African clawed frog).